Reading from the N-terminus, the 261-residue chain is MKWLNSLWIAFSMYSKIRVPMKEWEESSMRYAICFFPLIGAVIGGVFFLTFQIGHLLKLGDILIAALLTSIPILISGGIHMDGYCDTMDAISSYQSKERRLEILKDPHSGAFAIIRSGVYFLLYFGMVSVLTLKSSIIIAIFFVVSRALSGLAVVQFKTAKSNGLVATFQQAAHKRKVTISMVIYLVITVIGMLLVSPILTVVGMLTALLCFIRYKKLAYQLFGGTTGDLAGYFLVRCELMAGLAVVIAEGVIIYGTGHWW.

Transmembrane regions (helical) follow at residues 31 to 51 (YAIC…FLTF), 59 to 79 (LGDI…SGGI), 125 to 145 (FGMV…FFVV), 183 to 203 (VIYL…LTVV), and 240 to 260 (LMAG…TGHW).

It belongs to the CobS family. Mg(2+) serves as cofactor.

The protein localises to the cell membrane. The enzyme catalyses alpha-ribazole + adenosylcob(III)inamide-GDP = adenosylcob(III)alamin + GMP + H(+). It carries out the reaction alpha-ribazole 5'-phosphate + adenosylcob(III)inamide-GDP = adenosylcob(III)alamin 5'-phosphate + GMP + H(+). It participates in cofactor biosynthesis; adenosylcobalamin biosynthesis; adenosylcobalamin from cob(II)yrinate a,c-diamide: step 7/7. Its function is as follows. Joins adenosylcobinamide-GDP and alpha-ribazole to generate adenosylcobalamin (Ado-cobalamin). Also synthesizes adenosylcobalamin 5'-phosphate from adenosylcobinamide-GDP and alpha-ribazole 5'-phosphate. The polypeptide is Adenosylcobinamide-GDP ribazoletransferase (Lachnoclostridium phytofermentans (strain ATCC 700394 / DSM 18823 / ISDg) (Clostridium phytofermentans)).